The chain runs to 392 residues: MKEIHKQPPTIAIVAGEVSGDILGAGLIRSLKVQYPHARFIGIAGPRMLAEGAETLVDMEELSVMGLAEVVKHLPRLLKIRRQLIHTMLQEKPDIFIGIDAPDFNIDVELKLKENGIKTIHYVSPSVWAWRQNRIHKIAKATHLVLAFLPFEKAFYDRFEVPCRFIGHTMADAIALKPNRQEACEYLNLDASQRYVAILVGSRGSEVTFLAEPFLQAAKLLKQQYPDIQFLVPLINAKRREQFEQIKAQVAPELELILLDGKARQAMIAAEATLLASGTAALEAMLCKSPMVVGYRMKATTYFLAKRLVKTEYVSLPNLLANEMLVPELIQEQCTAENLAEKLALYLSQEESALQQRHTLIQRFTDLHKLIQCDADKQAAQAVIALLEQEDK.

It belongs to the LpxB family.

It carries out the reaction a lipid X + a UDP-2-N,3-O-bis[(3R)-3-hydroxyacyl]-alpha-D-glucosamine = a lipid A disaccharide + UDP + H(+). The protein operates within bacterial outer membrane biogenesis; LPS lipid A biosynthesis. In terms of biological role, condensation of UDP-2,3-diacylglucosamine and 2,3-diacylglucosamine-1-phosphate to form lipid A disaccharide, a precursor of lipid A, a phosphorylated glycolipid that anchors the lipopolysaccharide to the outer membrane of the cell. The polypeptide is Lipid-A-disaccharide synthase (lpxB) (Pasteurella multocida (strain Pm70)).